The chain runs to 353 residues: Nicotinate-nucleotide--dimethylbenzimidazole phosphoribosyltransferase (353 aa).

Glutamate 320 serves as the catalytic Proton acceptor.

It belongs to the CobT family.

It carries out the reaction 5,6-dimethylbenzimidazole + nicotinate beta-D-ribonucleotide = alpha-ribazole 5'-phosphate + nicotinate + H(+). It functions in the pathway nucleoside biosynthesis; alpha-ribazole biosynthesis; alpha-ribazole from 5,6-dimethylbenzimidazole: step 1/2. Functionally, catalyzes the synthesis of alpha-ribazole-5'-phosphate from nicotinate mononucleotide (NAMN) and 5,6-dimethylbenzimidazole (DMB). This is Nicotinate-nucleotide--dimethylbenzimidazole phosphoribosyltransferase from Syntrophotalea carbinolica (strain DSM 2380 / NBRC 103641 / GraBd1) (Pelobacter carbinolicus).